Consider the following 119-residue polypeptide: uncharacterized protein (119 aa).

Residues 1–29 (MKKVGEEEIKQEENEKEKIVKKLNESDVK) adopt a coiled-coil conformation.

This is an uncharacterized protein from Acidianus sp. F28 (AFV-2).